A 969-amino-acid chain; its full sequence is Liprin-beta-1 (969 aa).

Phosphoserine is present on serine 37. Position 39 is a phosphothreonine (threonine 39). Serine 40 is modified (phosphoserine). Positions 99 to 310 (GDVYQERLAR…CLSRYRKMQD (212 aa)) form a coiled coil. An N6-acetyllysine modification is found at lysine 291. 3 disordered regions span residues 342 to 361 (DLER…RDLL), 381 to 407 (LLPP…FEEG), and 424 to 482 (GVST…RKAR). Over residues 346-358 (STSSTPGMGSPSR) the composition is skewed to low complexity. A phosphoserine mark is found at serine 403 and serine 435. Residues 426-438 (STSSLQKSSSLGN) show a composition bias toward low complexity. Over residues 439-452 (LKKEASDGTDKAPT) the composition is skewed to basic and acidic residues. Lysine 440 is covalently cross-linked (Glycyl lysine isopeptide (Lys-Gly) (interchain with G-Cter in SUMO2)). Residue serine 500 is modified to Phosphoserine. Polar residues predominate over residues 518 to 529 (AGTSRSKGSQGT). A disordered region spans residues 518–593 (AGTSRSKGSQ…PRLGWSRDLG (76 aa)). Residue serine 538 is modified to Phosphoserine. Over residues 543–557 (KKSRGIMRLFGKLRR) the composition is skewed to basic residues. A phosphoserine mark is found at serine 560 and serine 595. SAM domains follow at residues 606–670 (WTKE…LGSE) and 678–741 (LDFN…LRIN). Phosphoserine is present on residues serine 753 and serine 757. The SAM 3 domain occupies 763–835 (VQQWTNHRVM…ATHFNLLIGA (73 aa)). Phosphoserine is present on residues serine 957, serine 959, and serine 961. The residue at position 963 (threonine 963) is a Phosphothreonine.

It belongs to the liprin family. Liprin-beta subfamily. Forms homodimers and heterodimers. Interacts with S100A4 in a Ca(2+)-dependent mode. Part of a cortical microtubule stabilization complex (CMSC) composed of KANK1, PPFIA1, PPFIBP1, ERC1/ELKS, PHLDB2/LL5beta, CLASPs, KIF21A and possibly additional interactors; within CMSCs KANK1 and PHLDB2/LL5beta seem to be the core components for recruiting microtubule-binding proteins KIF21A and CLASPs, whereas PPFIA1, PPFIBP1 and ERC1/ELKS serve as scaffolds for protein clustering. Interacts with KANK1 (via CC1 domain, residues 244-339).

The protein localises to the cytoplasm. It localises to the cell cortex. Functionally, may regulate the disassembly of focal adhesions. Did not bind receptor-like tyrosine phosphatases type 2A. The chain is Liprin-beta-1 (Ppfibp1) from Mus musculus (Mouse).